A 92-amino-acid chain; its full sequence is Small ribosomal subunit protein uS19 (92 aa).

The protein belongs to the universal ribosomal protein uS19 family.

In terms of biological role, protein S19 forms a complex with S13 that binds strongly to the 16S ribosomal RNA. This Corynebacterium diphtheriae (strain ATCC 700971 / NCTC 13129 / Biotype gravis) protein is Small ribosomal subunit protein uS19.